Reading from the N-terminus, the 646-residue chain is Cartilage acidic protein 1 (646 aa).

The N-terminal stretch at 1-28 (MAPSADPGMVRMALLLLPPLWLLPLTGG) is a signal peptide. The FG-GAP 1; atypical repeat unit spans residues 47–89 (DYDSNPTQLNYGVAVTDVDHDGDFEIVVAGYTGPNLVLKYNRA). One copy of the FG-GAP 2; atypical repeat lies at 106 to 148 (YALRDRQGNAIGVTACDIDGDGREEIYFLNTNNAFSGVATYTD). The stretch at 284–334 (AGVDDPHQHGRGVALADFNRDGKVDIVYGNWNGPHRLYLQMSAHGKVRFRD) is one FG-GAP 3; atypical repeat. The FG-GAP 4; atypical repeat unit spans residues 396–438 (GDALEPEGRGTGGVVTDFDGDGMLDLILSHGESMAQPLSVFRG). The 47-residue stretch at 560–606 (DTNECIQFPFVCPRDKPVCVNTYGSYRCRTNKRCNRGYEPNEDGTAC) folds into the EGF-like domain. Intrachain disulfides connect Cys564/Cys578, Cys571/Cys587, and Cys593/Cys606.

It is found in the secreted. Its subcellular location is the extracellular space. The protein resides in the extracellular matrix. In Mus musculus (Mouse), this protein is Cartilage acidic protein 1 (Crtac1).